Consider the following 119-residue polypeptide: Large ribosomal subunit protein uL18 (119 aa).

This sequence belongs to the universal ribosomal protein uL18 family. Part of the 50S ribosomal subunit; part of the 5S rRNA/L5/L18/L25 subcomplex. Contacts the 5S and 23S rRNAs.

Its function is as follows. This is one of the proteins that bind and probably mediate the attachment of the 5S RNA into the large ribosomal subunit, where it forms part of the central protuberance. The chain is Large ribosomal subunit protein uL18 from Micrococcus luteus (Micrococcus lysodeikticus).